A 290-amino-acid chain; its full sequence is 33 kDa chaperonin (290 aa).

2 disulfides stabilise this stretch: C236/C238 and C269/C272.

The protein belongs to the HSP33 family. In terms of processing, under oxidizing conditions two disulfide bonds are formed involving the reactive cysteines. Under reducing conditions zinc is bound to the reactive cysteines and the protein is inactive.

The protein localises to the cytoplasm. In terms of biological role, redox regulated molecular chaperone. Protects both thermally unfolding and oxidatively damaged proteins from irreversible aggregation. Plays an important role in the bacterial defense system toward oxidative stress. The polypeptide is 33 kDa chaperonin (Acholeplasma laidlawii (strain PG-8A)).